The following is a 248-amino-acid chain: Small ribosomal subunit protein eS6 (248 aa).

Residues V215 to K248 are disordered. The span at A223–K248 shows a compositional bias: basic and acidic residues. S233, S235, S239, S242, S244, and S245 each carry phosphoserine.

Belongs to the eukaryotic ribosomal protein eS6 family. In terms of assembly, component of the small ribosomal subunit. Part of the small subunit (SSU) processome, composed of more than 70 proteins and the RNA chaperone small nucleolar RNA (snoRNA) U3. In terms of processing, ribosomal protein S6 is the major substrate of protein kinases in eukaryote ribosomes. The phosphorylation is stimulated by growth factors, tumor promoting agents, and mitogens. It is dephosphorylated at growth arrest.

The protein resides in the cytoplasm. Its subcellular location is the nucleus. It is found in the nucleolus. In terms of biological role, component of the 40S small ribosomal subunit. Plays an important role in controlling cell growth and proliferation through the selective translation of particular classes of mRNA. Part of the small subunit (SSU) processome, first precursor of the small eukaryotic ribosomal subunit. During the assembly of the SSU processome in the nucleolus, many ribosome biogenesis factors, an RNA chaperone and ribosomal proteins associate with the nascent pre-rRNA and work in concert to generate RNA folding, modifications, rearrangements and cleavage as well as targeted degradation of pre-ribosomal RNA by the RNA exosome. This chain is Small ribosomal subunit protein eS6 (RpS6), found in Drosophila melanogaster (Fruit fly).